Consider the following 484-residue polypeptide: Acetyl-coenzyme A carboxylase carboxyl transferase subunit beta, chloroplastic (484 aa).

One can recognise a CoA carboxyltransferase N-terminal domain in the interval 223–484; the sequence is LWIQCDNCYG…LHAFFPLNKN (262 aa). 4 residues coordinate Zn(2+): cysteine 227, cysteine 230, cysteine 243, and cysteine 246. Residues 227–246 form a C4-type zinc finger; sequence CDNCYGLMYKKVKMNVCEQC.

It belongs to the AccD/PCCB family. As to quaternary structure, acetyl-CoA carboxylase is a heterohexamer composed of biotin carboxyl carrier protein, biotin carboxylase and 2 subunits each of ACCase subunit alpha and ACCase plastid-coded subunit beta (accD). The cofactor is Zn(2+).

It is found in the plastid. Its subcellular location is the chloroplast stroma. It catalyses the reaction N(6)-carboxybiotinyl-L-lysyl-[protein] + acetyl-CoA = N(6)-biotinyl-L-lysyl-[protein] + malonyl-CoA. The protein operates within lipid metabolism; malonyl-CoA biosynthesis; malonyl-CoA from acetyl-CoA: step 1/1. Component of the acetyl coenzyme A carboxylase (ACC) complex. Biotin carboxylase (BC) catalyzes the carboxylation of biotin on its carrier protein (BCCP) and then the CO(2) group is transferred by the transcarboxylase to acetyl-CoA to form malonyl-CoA. In Crucihimalaya wallichii (Rock-cress), this protein is Acetyl-coenzyme A carboxylase carboxyl transferase subunit beta, chloroplastic.